The chain runs to 390 residues: tRNA-specific 2-thiouridylase MnmA (390 aa).

Residues 20–27 (AMSGGVDS) and Leu46 each bind ATP. The Nucleophile role is filled by Cys114. An intrachain disulfide couples Cys114 to Cys211. Residue Gly138 coordinates ATP. Residues 161–163 (RDQ) form an interaction with tRNA region. Residue Cys211 is the Cysteine persulfide intermediate of the active site.

It belongs to the MnmA/TRMU family.

It localises to the cytoplasm. It catalyses the reaction S-sulfanyl-L-cysteinyl-[protein] + uridine(34) in tRNA + AH2 + ATP = 2-thiouridine(34) in tRNA + L-cysteinyl-[protein] + A + AMP + diphosphate + H(+). Functionally, catalyzes the 2-thiolation of uridine at the wobble position (U34) of tRNA, leading to the formation of s(2)U34. This is tRNA-specific 2-thiouridylase MnmA from Azorhizobium caulinodans (strain ATCC 43989 / DSM 5975 / JCM 20966 / LMG 6465 / NBRC 14845 / NCIMB 13405 / ORS 571).